Here is a 334-residue protein sequence, read N- to C-terminus: Biotin synthase (334 aa).

Residues 55–280 (EEIEVEGIIS…HTMLRFAGGR (226 aa)) form the Radical SAM core domain. 3 residues coordinate [4Fe-4S] cluster: Cys70, Cys74, and Cys77. [2Fe-2S] cluster-binding residues include Cys113, Cys205, and Arg275.

This sequence belongs to the radical SAM superfamily. Biotin synthase family. Homodimer. [4Fe-4S] cluster serves as cofactor. Requires [2Fe-2S] cluster as cofactor.

It catalyses the reaction (4R,5S)-dethiobiotin + (sulfur carrier)-SH + 2 reduced [2Fe-2S]-[ferredoxin] + 2 S-adenosyl-L-methionine = (sulfur carrier)-H + biotin + 2 5'-deoxyadenosine + 2 L-methionine + 2 oxidized [2Fe-2S]-[ferredoxin]. It functions in the pathway cofactor biosynthesis; biotin biosynthesis; biotin from 7,8-diaminononanoate: step 2/2. In terms of biological role, catalyzes the conversion of dethiobiotin (DTB) to biotin by the insertion of a sulfur atom into dethiobiotin via a radical-based mechanism. The chain is Biotin synthase from Corynebacterium glutamicum (strain R).